We begin with the raw amino-acid sequence, 447 residues long: Serine/threonine-protein phosphatase 2A 55 kDa regulatory subunit B alpha isoform (447 aa).

At Ala2 the chain carries N-acetylalanine. WD repeat units lie at residues 11-80 (QWCF…FQSH), 94-174 (EKIN…IFAN), 175-218 (AHTY…VDIK), 227-270 (EVIT…KLFE), 288-325 (ISDVKFSHSGRYMMTRDYLSVKIWDLNMENRPVETYQV), 347-381 (ECCWNGSDSVVMTGSYNNFFRMFDRNTKRDITLEA), and 414-446 (DFNKKILHTAWHPKENIIAVATTNNLYIFQDKV).

The protein belongs to the phosphatase 2A regulatory subunit B family. As to quaternary structure, PP2A consists of a common heterodimeric core enzyme, composed of a 36 kDa catalytic subunit (subunit C) and a 65 kDa constant regulatory subunit (PR65 or subunit A), that associates with a variety of regulatory subunits. Proteins that associate with the core dimer include three families of regulatory subunits B (the R2/B/PR55/B55, R3/B''/PR72/PR130/PR59 and R5/B'/B56 families), the 48 kDa variable regulatory subunit, viral proteins, and cell signaling molecules. Interacts with the PP2A C catalytic subunit PPP2CA. Interacts with the PP2A A subunit PPP2R1A. Interacts with TP53. Interacts with IER5. Interacts with MFHAS1; the interaction is direct. Interacts with PABIR1/FAM122A (via its N-terminus); the interaction is direct and inhibits PP2A activity. Interacts with ARPP19; the interaction is direct and inhibits PP2A activity. Interacts with CRTC3. As to expression, expressed in all tissues examined.

In terms of biological role, substrate-recognition subunit of protein phosphatase 2A (PP2A) that plays a key role in cell cycle by controlling mitosis entry and exit. Involved in chromosome clustering during late mitosis by mediating dephosphorylation of MKI67. Essential for serine/threonine-protein phosphatase 2A-mediated dephosphorylation of WEE1, preventing its ubiquitin-mediated proteolysis, increasing WEE1 protein levels, and promoting the G2/M checkpoint. The polypeptide is Serine/threonine-protein phosphatase 2A 55 kDa regulatory subunit B alpha isoform (PPP2R2A) (Homo sapiens (Human)).